Here is a 272-residue protein sequence, read N- to C-terminus: 2-dehydro-3-deoxyphosphooctonate aldolase (272 aa).

The protein belongs to the KdsA family.

The protein localises to the cytoplasm. The catalysed reaction is D-arabinose 5-phosphate + phosphoenolpyruvate + H2O = 3-deoxy-alpha-D-manno-2-octulosonate-8-phosphate + phosphate. It functions in the pathway carbohydrate biosynthesis; 3-deoxy-D-manno-octulosonate biosynthesis; 3-deoxy-D-manno-octulosonate from D-ribulose 5-phosphate: step 2/3. Its pathway is bacterial outer membrane biogenesis; lipopolysaccharide biosynthesis. The chain is 2-dehydro-3-deoxyphosphooctonate aldolase from Geobacter sulfurreducens (strain ATCC 51573 / DSM 12127 / PCA).